The sequence spans 703 residues: DNA ligase (703 aa).

NAD(+)-binding positions include 44-48, 93-94, and glutamate 127; these read DAEYD and SL. Lysine 129 (N6-AMP-lysine intermediate) is an active-site residue. The NAD(+) site is built by arginine 150, glutamate 186, lysine 302, and lysine 326. The Zn(2+) site is built by cysteine 420, cysteine 422, cysteine 444, and cysteine 450. The region spanning 625 to 703 is the BRCT domain; the sequence is VADSPVAGKT…EDMWFQRIGA (79 aa).

This sequence belongs to the NAD-dependent DNA ligase family. LigA subfamily. Requires Mg(2+) as cofactor. Mn(2+) serves as cofactor.

The catalysed reaction is NAD(+) + (deoxyribonucleotide)n-3'-hydroxyl + 5'-phospho-(deoxyribonucleotide)m = (deoxyribonucleotide)n+m + AMP + beta-nicotinamide D-nucleotide.. Functionally, DNA ligase that catalyzes the formation of phosphodiester linkages between 5'-phosphoryl and 3'-hydroxyl groups in double-stranded DNA using NAD as a coenzyme and as the energy source for the reaction. It is essential for DNA replication and repair of damaged DNA. This is DNA ligase from Chelativorans sp. (strain BNC1).